The chain runs to 310 residues: Probable cell division protein WhiA (310 aa).

A DNA-binding region (H-T-H motif) is located at residues 277–310 (SLKELAEQVPDGPISKSGVNHRLKKLHEIAENLR).

This sequence belongs to the WhiA family.

Functionally, involved in cell division and chromosome segregation. The chain is Probable cell division protein WhiA from Lactobacillus delbrueckii subsp. bulgaricus (strain ATCC BAA-365 / Lb-18).